The sequence spans 482 residues: Glutamate-rich WD repeat-containing protein 1 (482 aa).

Disordered regions lie at residues 1–75 (MSSK…WRAG) and 148–180 (QLHK…EDKD). 2 stretches are compositionally biased toward acidic residues: residues 27 to 63 (NGED…DNDG) and 157 to 180 (EDSD…EDKD). WD repeat units lie at residues 191-231 (NHNG…KALD), 294-334 (GHTE…PAIT), 337-377 (AHTA…DNSP), 383-423 (YHTG…DTEE), and 446-482 (QGQH…NSEE).

Its subcellular location is the nucleus. The protein localises to the nucleolus. The chain is Glutamate-rich WD repeat-containing protein 1 (grwd1) from Dictyostelium discoideum (Social amoeba).